Reading from the N-terminus, the 525-residue chain is MRRRRRRDGFYPAPDFRDREAEDMAGVFDIDLDQPEDAGSEDELEEGGQLNESMDHGGVGPYELGMEHCEKFEISETSVNRGPEKIRPECFELLRVLGKGGYGKVFQVRKVTGANTGKIFAMKVLKKAMIVRNAKDTAHTKAERNILEEVKHPFIVDLIYAFQTGGKLYLILEYLSGGELFMQLEREGIFMEDTACFYLAEISMALGHLHQKGIIYRDLKPENIMLNHQGHVKLTDFGLCKESIHDGTVTHTFCGTIEYMAPEILMRSGHNRAVDWWSLGALMYDMLTGAPPFTGENRKKTIDKILKCKLNLPPYLTQEARDLLKKLLKRNAASRLGAGPGDAGEVQAHPFFRHINWEELLARKVEPPFKPLLQSEEDVSQFDSKFTRQTPVDSPDDSTLSESANQVFLGFTYVAPSVLESVKEKFSFEPKIRSPRRFIGSPRTPVSPVKFSPGDFWGRGASASTANPQTPVEYPMETSGIEQMDVTMSGEASAPLPIRQPNSGPYKKQAFPMISKRPEHLRMNL.

A disordered region spans residues 1–54; sequence MRRRRRRDGFYPAPDFRDREAEDMAGVFDIDLDQPEDAGSEDELEEGGQLNESM. The short motif at 28 to 32 is the TOS motif element; the sequence is FDIDL. A compositionally biased stretch (acidic residues) spans 30–46; that stretch reads IDLDQPEDAGSEDELEE. A Protein kinase domain is found at 91–352; the sequence is FELLRVLGKG…AGEVQAHPFF (262 aa). ATP contacts are provided by residues 97–105 and Lys-123; that span reads LGKGGYGKV. Asp-218 serves as the catalytic Proton acceptor. Position 252 is a phosphothreonine; by PDPK1 (Thr-252). The AGC-kinase C-terminal domain maps to 353 to 423; it reads RHINWEELLA…VAPSVLESVK (71 aa). Residues 380–399 are disordered; sequence SQFDSKFTRQTPVDSPDDST. The span at 381–399 shows a compositional bias: polar residues; it reads QFDSKFTRQTPVDSPDDST. Position 394 is a phosphoserine (Ser-394). Phosphothreonine; by MTOR, NEK6 and NEK7 is present on Thr-412. The autoinhibitory domain stretch occupies residues 424–525; the sequence is EKFSFEPKIR…KRPEHLRMNL (102 aa). Residues Ser-434 and Ser-441 each carry the phosphoserine modification. Thr-444 carries the post-translational modification Phosphothreonine. A phosphoserine mark is found at Ser-447 and Ser-452. An N6-acetyllysine modification is found at Lys-516.

This sequence belongs to the protein kinase superfamily. AGC Ser/Thr protein kinase family. S6 kinase subfamily. In terms of assembly, interacts with PPP1R9A/neurabin-1. Interacts with RPTOR. Interacts with IRS1. Interacts with EIF3B and EIF3C. Interacts with TRAF4. Interacts with POLDIP3. Interacts (via N-terminus) with IER5. As to quaternary structure, (Microbial infection) Interacts with Mumps virus phosphoprotein; this interaction may play a role in the viral replication and transcription. Post-translationally, phosphorylation at Thr-412 is regulated by mTORC1. The phosphorylation at this site is maintained by an agonist-dependent autophosphorylation mechanism. Activated by phosphorylation at Thr-252 by PDPK1. Dephosphorylation by PPP1CC at Thr-412 in mitochondrion. Widely expressed.

The protein localises to the synapse. It is found in the synaptosome. The protein resides in the mitochondrion outer membrane. Its subcellular location is the mitochondrion. It localises to the nucleus. The protein localises to the cytoplasm. The catalysed reaction is L-seryl-[protein] + ATP = O-phospho-L-seryl-[protein] + ADP + H(+). It carries out the reaction L-threonyl-[protein] + ATP = O-phospho-L-threonyl-[protein] + ADP + H(+). Activation requires multiple phosphorylation events on serine/threonine residues. Activation appears to be first mediated by phosphorylation of multiple sites in the autoinhibitory domain, which facilitates phosphorylation at Thr-412, disrupting the autoinhibitory mechanism and allowing phosphorylation of Thr-252 by PDPK1. The active conformation of the kinase is believed to be stabilized by a mechanism involving three conserved phosphorylation sites located in the kinase domain activation loop (Thr-252) and in the AGC-kinase C-terminal domain (Ser-394 in the middle of the tail/linker region and Thr-412 within a hydrophobic motif at its end). Activated by mTORC1; isoform Alpha I and isoform Alpha II are sensitive to rapamycin, which inhibits activating phosphorylation at Thr-412. Activated by PDPK1. Its function is as follows. Serine/threonine-protein kinase that acts downstream of mTOR signaling in response to growth factors and nutrients to promote cell proliferation, cell growth and cell cycle progression. Regulates protein synthesis through phosphorylation of EIF4B, RPS6 and EEF2K, and contributes to cell survival by repressing the pro-apoptotic function of BAD. Under conditions of nutrient depletion, the inactive form associates with the EIF3 translation initiation complex. Upon mitogenic stimulation, phosphorylation by the mechanistic target of rapamycin complex 1 (mTORC1) leads to dissociation from the EIF3 complex and activation. The active form then phosphorylates and activates several substrates in the pre-initiation complex, including the EIF2B complex and the cap-binding complex component EIF4B. Also controls translation initiation by phosphorylating a negative regulator of EIF4A, PDCD4, targeting it for ubiquitination and subsequent proteolysis. Promotes initiation of the pioneer round of protein synthesis by phosphorylating POLDIP3/SKAR. In response to IGF1, activates translation elongation by phosphorylating EEF2 kinase (EEF2K), which leads to its inhibition and thus activation of EEF2. Also plays a role in feedback regulation of mTORC2 by mTORC1 by phosphorylating MAPKAP1/SIN1, MTOR and RICTOR, resulting in the inhibition of mTORC2 and AKT1 signaling. Also involved in feedback regulation of mTORC1 and mTORC2 by phosphorylating DEPTOR. Mediates cell survival by phosphorylating the pro-apoptotic protein BAD and suppressing its pro-apoptotic function. Phosphorylates mitochondrial URI1 leading to dissociation of a URI1-PPP1CC complex. The free mitochondrial PPP1CC can then dephosphorylate RPS6KB1 at Thr-412, which is proposed to be a negative feedback mechanism for the RPS6KB1 anti-apoptotic function. Mediates TNF-alpha-induced insulin resistance by phosphorylating IRS1 at multiple serine residues, resulting in accelerated degradation of IRS1. In cells lacking functional TSC1-2 complex, constitutively phosphorylates and inhibits GSK3B. May be involved in cytoskeletal rearrangement through binding to neurabin. Phosphorylates and activates the pyrimidine biosynthesis enzyme CAD, downstream of MTOR. Following activation by mTORC1, phosphorylates EPRS and thereby plays a key role in fatty acid uptake by adipocytes and also most probably in interferon-gamma-induced translation inhibition. In Homo sapiens (Human), this protein is Ribosomal protein S6 kinase beta-1 (RPS6KB1).